Here is a 126-residue protein sequence, read N- to C-terminus: S-adenosylmethionine decarboxylase proenzyme (126 aa).

Residue Ser63 is the Schiff-base intermediate with substrate; via pyruvic acid of the active site. Ser63 is subject to Pyruvic acid (Ser); by autocatalysis. The active-site Proton acceptor; for processing activity is His68. Cys83 acts as the Proton donor; for catalytic activity in catalysis.

Belongs to the prokaryotic AdoMetDC family. Type 1 subfamily. Heterotetramer of two alpha and two beta chains arranged as a dimer of alpha/beta heterodimers. Pyruvate is required as a cofactor. Post-translationally, is synthesized initially as an inactive proenzyme. Formation of the active enzyme involves a self-maturation process in which the active site pyruvoyl group is generated from an internal serine residue via an autocatalytic post-translational modification. Two non-identical subunits are generated from the proenzyme in this reaction, and the pyruvate is formed at the N-terminus of the alpha chain, which is derived from the carboxyl end of the proenzyme. The post-translation cleavage follows an unusual pathway, termed non-hydrolytic serinolysis, in which the side chain hydroxyl group of the serine supplies its oxygen atom to form the C-terminus of the beta chain, while the remainder of the serine residue undergoes an oxidative deamination to produce ammonia and the pyruvoyl group blocking the N-terminus of the alpha chain.

The catalysed reaction is S-adenosyl-L-methionine + H(+) = S-adenosyl 3-(methylsulfanyl)propylamine + CO2. It functions in the pathway amine and polyamine biosynthesis; S-adenosylmethioninamine biosynthesis; S-adenosylmethioninamine from S-adenosyl-L-methionine: step 1/1. Functionally, catalyzes the decarboxylation of S-adenosylmethionine to S-adenosylmethioninamine (dcAdoMet), the propylamine donor required for the synthesis of the polyamines spermine and spermidine from the diamine putrescine. This Syntrophomonas wolfei subsp. wolfei (strain DSM 2245B / Goettingen) protein is S-adenosylmethionine decarboxylase proenzyme.